A 618-amino-acid polypeptide reads, in one-letter code: Nuclear RNA export factor 1 (618 aa).

Positions 1 to 15 (MADEGKSYNEHDDRV) are enriched in basic and acidic residues. The segment at 1-113 (MADEGKSYNE…RGGAGTSQDG (113 aa)) is disordered. Ala2 carries the post-translational modification N-acetylalanine. The interval 2 to 59 (ADEGKSYNEHDDRVSFPQRRKKGRGPFRWKCGVGNRRSGRGGSGIRSSRFEEDDGDVA) is minor non-specific RNA-binding. The interval 2 to 117 (ADEGKSYNEH…GTSQDGTTKN (116 aa)) is RNA-binding (RBD). An interaction with ALYREF/THOC4 and LUZP4 region spans residues 2-197 (ADEGKSYNEH…IIINSSAPPY (196 aa)). Positions 19-28 (QRRKKGRGPF) are enriched in basic residues. Arg41 is modified (asymmetric dimethylarginine; alternate). Arg41 bears the Omega-N-methylarginine; alternate mark. The interval 60–117 (MNDPQDGPRVRFNPYTTRPNRRRDTWHDRDRIHVTVRRDRAPQERGGAGTSQDGTTKN) is major non-specific RNA-binding. Positions 60–117 (MNDPQDGPRVRFNPYTTRPNRRRDTWHDRDRIHVTVRRDRAPQERGGAGTSQDGTTKN) are RNA binding. The Nuclear localization signal motif lies at 66–99 (GPRVRFNPYTTRPNRRRDTWHDRDRIHVTVRRDR). Positions 81 to 102 (RRDTWHDRDRIHVTVRRDRAPQ) are enriched in basic and acidic residues. The short motif at 82 to 109 (RDTWHDRDRIHVTVRRDRAPQERGGAGT) is the Nuclear export signal element. One can recognise an RRM domain in the interval 118 to 197 (WFKITIPYGK…IIINSSAPPY (80 aa)). Residue Tyr125 is modified to 3'-nitrotyrosine. 4 LRR repeats span residues 265–290 (ELLS…QKAP), 291–314 (NLKI…IKGL), 315–342 (KLEE…TIRE), and 343–370 (RFPK…TMLP). Residues 385-535 (LVLHFLQQYY…LCIVNDELFV (151 aa)) enclose the NTF2 domain. In terms of domain architecture, TAP-C spans 564–618 (QEQQDMLQAFSTQSGMNLEWSQKCLQDNNWDYTRSAQAFTHLKAKGEIPEVAFMK).

It belongs to the NXF family. Heterodimer (via NTF2 domain) with NXT1. The formation of NXF1-NXT1 heterodimers is required for the NXF1-mediated nuclear mRNA export. Forms a complex with RANBP2/NUP358, NXT1 and RANGAP1. Associates with the exon junction complex (EJC). Associates with the transcription/export (TREX) complex. Found in a mRNA complex with UPF3A and UPF3B. Found in a post-splicing complex with RBM8A, UPF1, UPF2, UPF3A, UPF3B and RNPS1. Interacts (via N-terminus) with DHX9 (via N-terminus); this interaction is direct and negatively regulates NXF1-mediated nuclear export of constitutive transport element (CTE)-containing cellular mRNAs. Interacts with FYTTD1/UIF. Interacts with EIF4A3. Interacts with NUP42. Interacts with ALYREF/THOC4. Interacts with CHTOP. Interacts with FRG1 (via N-terminus). Interacts with LUZP4. Interacts with FMR1; the interaction occurs in a mRNA-dependent and polyribosomes-independent manner in the nucleus. Interacts with CPSF6 (via N-terminus); this interaction is direct. Interacts with RBM15. Interacts with RBM15B. Interacts with MCM3AP; this interaction is not mediated by RNA. Interacts with DDX3X (via C-terminus); this interaction may be partly involved in DDX3X nuclear export and in NXF1 localization to stress granules. Interacts with PABPC1/PABP1.

It localises to the nucleus. The protein resides in the nucleoplasm. The protein localises to the nucleus speckle. It is found in the nuclear pore complex. Its subcellular location is the nucleus envelope. It localises to the cytoplasm. The protein resides in the stress granule. Involved in the nuclear export of mRNA species bearing retroviral constitutive transport elements (CTE) and in the export of mRNA from the nucleus to the cytoplasm (TAP/NFX1 pathway). The NXF1-NXT1 heterodimer is involved in the export of HSP70 mRNA in conjunction with ALYREF/THOC4 and THOC5 components of the TREX complex. ALYREF/THOC4-bound mRNA is thought to be transferred to the NXF1-NXT1 heterodimer for export. Also involved in nuclear export of m6A-containing mRNAs: interaction between SRSF3 and YTHDC1 facilitates m6A-containing mRNA-binding to both SRSF3 and NXF1, promoting mRNA nuclear export. The polypeptide is Nuclear RNA export factor 1 (Nxf1) (Rattus norvegicus (Rat)).